The sequence spans 192 residues: dTTP/UTP pyrophosphatase (192 aa).

The active-site Proton acceptor is Asp-72.

It belongs to the Maf family. YhdE subfamily. The cofactor is a divalent metal cation.

It is found in the cytoplasm. The catalysed reaction is dTTP + H2O = dTMP + diphosphate + H(+). It carries out the reaction UTP + H2O = UMP + diphosphate + H(+). Functionally, nucleoside triphosphate pyrophosphatase that hydrolyzes dTTP and UTP. May have a dual role in cell division arrest and in preventing the incorporation of modified nucleotides into cellular nucleic acids. The sequence is that of dTTP/UTP pyrophosphatase from Geobacter metallireducens (strain ATCC 53774 / DSM 7210 / GS-15).